The chain runs to 515 residues: Organic cation/carnitine transporter 5 (515 aa).

Over 1–43 (MADSLAPLLPTHIEEDEDTSSPLTFDKILEKSLSDFGFSQFLQ) the chain is Cytoplasmic. The chain crosses the membrane as a helical span at residues 44-64 (IVLVGLALTFDSQQIFITVFT). Topologically, residues 65 to 124 (DAYPTWHCLDHTICNPATTDICKIPRSAWDWDGGFKGKSVISEFDLECSSSFLRSLPSST) are extracellular. Residues 125–145 (FYVGSIVGGVVLAMIPDGSLG) traverse the membrane as a helical segment. The Cytoplasmic portion of the chain corresponds to 146–149 (RKQL). The helical transmembrane segment at 150–172 (LFFSSFAMSLTGISIFLSSNIWI) threads the bilayer. The Extracellular portion of the chain corresponds to 173 to 177 (YSFLK). A helical membrane pass occupies residues 178 to 195 (FVIGFARSQTGTYALVLI). 195–202 (ISERISTK) provides a ligand contact to ATP. Over 196–208 (SERISTKWRPRAT) the chain is Cytoplasmic. A helical transmembrane segment spans residues 209–229 (MVPFTLFVLGFMSLSGIAYLV). Residues 230 to 235 (RHASWK) lie on the Extracellular side of the membrane. The chain crosses the membrane as a helical span at residues 236–256 (VLYLCTSIPAGIHSIFIYFFA). The Cytoplasmic segment spans residues 257–320 (LESPRWLHLE…LFIIKWAFRR (64 aa)). The helical transmembrane segment at 321-341 (VTLVMIIMFGLGMSYYGVPLA) threads the bilayer. Residues 342 to 350 (VRDIKVNIY) are Extracellular-facing. Residues 351–371 (MSEALNAMVELPTFVVTPILL) traverse the membrane as a helical segment. Over 372–379 (EQFSRRSS) the chain is Cytoplasmic. A helical membrane pass occupies residues 380–400 (VLVNCLIGGASGVLCFVMSLY). The Extracellular segment spans residues 401 to 411 (GRTKIAFALEL). Residues 412 to 432 (GSFFCARIGFNLMAIYLVELF) form a helical membrane-spanning segment. Over 433–441 (PTCVRNSAT) the chain is Cytoplasmic. Residues 442–462 (MMLRQALVVGGACCPLIASLG) form a helical membrane-spanning segment. The Extracellular portion of the chain corresponds to 463–467 (RNVPS). A helical membrane pass occupies residues 468–488 (LSFAVFGFAMSGLGLFALLLP). Topologically, residues 489 to 515 (ETKGLSLCDTMEEQEQRDQALKTSHSC) are cytoplasmic.

It belongs to the major facilitator (TC 2.A.1) superfamily. Organic cation transporter (TC 2.A.1.19) family. In terms of tissue distribution, mostly expressed in leaves and siliques, and, to a lower extent, in roots, stems and flowers.

Its subcellular location is the vacuole membrane. In terms of biological role, high affinity carnitine transporter involved in the active cellular uptake of carnitine. Also transports organic cations. This is Organic cation/carnitine transporter 5 (OCT5) from Arabidopsis thaliana (Mouse-ear cress).